A 425-amino-acid chain; its full sequence is Serine--tRNA ligase (425 aa).

An L-serine-binding site is contributed by 233–235 (TAE). 264–266 (RRE) serves as a coordination point for ATP. Position 287 (Glu-287) interacts with L-serine. 351–354 (EISS) provides a ligand contact to ATP. Ser-387 is a binding site for L-serine.

This sequence belongs to the class-II aminoacyl-tRNA synthetase family. Type-1 seryl-tRNA synthetase subfamily. In terms of assembly, homodimer. The tRNA molecule binds across the dimer.

It localises to the cytoplasm. The enzyme catalyses tRNA(Ser) + L-serine + ATP = L-seryl-tRNA(Ser) + AMP + diphosphate + H(+). It catalyses the reaction tRNA(Sec) + L-serine + ATP = L-seryl-tRNA(Sec) + AMP + diphosphate + H(+). The protein operates within aminoacyl-tRNA biosynthesis; selenocysteinyl-tRNA(Sec) biosynthesis; L-seryl-tRNA(Sec) from L-serine and tRNA(Sec): step 1/1. Functionally, catalyzes the attachment of serine to tRNA(Ser). Is also able to aminoacylate tRNA(Sec) with serine, to form the misacylated tRNA L-seryl-tRNA(Sec), which will be further converted into selenocysteinyl-tRNA(Sec). This is Serine--tRNA ligase from Thermotoga maritima (strain ATCC 43589 / DSM 3109 / JCM 10099 / NBRC 100826 / MSB8).